We begin with the raw amino-acid sequence, 386 residues long: Succinyl-diaminopimelate desuccinylase (386 aa).

His-73 provides a ligand contact to Zn(2+). Residue Asp-75 is part of the active site. Residue Asp-106 coordinates Zn(2+). Residue Glu-140 is the Proton acceptor of the active site. 3 residues coordinate Zn(2+): Glu-141, Glu-169, and His-355.

It belongs to the peptidase M20A family. DapE subfamily. In terms of assembly, homodimer. It depends on Zn(2+) as a cofactor. The cofactor is Co(2+).

The catalysed reaction is N-succinyl-(2S,6S)-2,6-diaminopimelate + H2O = (2S,6S)-2,6-diaminopimelate + succinate. Its pathway is amino-acid biosynthesis; L-lysine biosynthesis via DAP pathway; LL-2,6-diaminopimelate from (S)-tetrahydrodipicolinate (succinylase route): step 3/3. Functionally, catalyzes the hydrolysis of N-succinyl-L,L-diaminopimelic acid (SDAP), forming succinate and LL-2,6-diaminopimelate (DAP), an intermediate involved in the bacterial biosynthesis of lysine and meso-diaminopimelic acid, an essential component of bacterial cell walls. The protein is Succinyl-diaminopimelate desuccinylase of Delftia acidovorans (strain DSM 14801 / SPH-1).